A 537-amino-acid chain; its full sequence is Exoglucanase 1 (537 aa).

Positions 1 to 18 (MKGSISYQIYKGALLLSA) are cleaved as a signal peptide. The interval 19–453 (LLNSVSAQQV…YVIYSNIKTG (435 aa)) is catalytic. A glycan (N-linked (GlcNAc...) asparagine) is linked at Asn-136. The active-site Nucleophile is Glu-235. Glu-240 serves as the catalytic Proton donor. N-linked (GlcNAc...) asparagine glycans are attached at residues Asn-414 and Asn-456. The tract at residues 454 to 477 (PLNSTFTGGTTSSSSTTTTTSKST) is linker. A compositionally biased stretch (low complexity) spans 458 to 502 (TFTGGTTSSSSTTTTTSKSTSTSSSSKTTTTVTTTTTSSGSSGTG). Residues 458 to 503 (TFTGGTTSSSSTTTTTSKSTSTSSSSKTTTTVTTTTTSSGSSGTGA) form a disordered region. In terms of domain architecture, CBM1 spans 501–537 (TGARDWAQCGGNGWTGPTTCVSPYTCTKQNDWYSQCL). 2 cysteine pairs are disulfide-bonded: Cys-509–Cys-526 and Cys-520–Cys-536.

Belongs to the glycosyl hydrolase 7 (cellulase C) family.

It is found in the secreted. The enzyme catalyses Hydrolysis of (1-&gt;4)-beta-D-glucosidic linkages in cellulose and cellotetraose, releasing cellobiose from the non-reducing ends of the chains.. The protein is Exoglucanase 1 (cbh1) of Penicillium janthinellum (Penicillium vitale).